The chain runs to 161 residues: Nucleotide-binding protein Rfer_2692 (161 aa).

The protein belongs to the YajQ family.

In terms of biological role, nucleotide-binding protein. This chain is Nucleotide-binding protein Rfer_2692, found in Albidiferax ferrireducens (strain ATCC BAA-621 / DSM 15236 / T118) (Rhodoferax ferrireducens).